A 320-amino-acid polypeptide reads, in one-letter code: MEIYGMVTGKAGKSGYGSASTAEDVTHSIDAKHLTAIITGGTSGIGLEAARVLGMRGAHVIIAARNTKAANDSKEMILQMYPNARIDCLQLDLSSIKSVRSFIHQFLALNVPLNILINNAGVMFCPFQLSEDGIESQFATNHIGHFLLTNLLLDKMKSSARESGIEGRIVNLSSIAHTYTYTEGIMFDYINDPDRYSEKKAYGQSKLANLLHSNALSRKLQEEGVNITINSVHPGLITTNLFRHSGLGMAVLKAMSFFLWKNIPQGAATTCYVALHPDLKGVTGKYFTDCNVTTPSNFAIDTTLADKLWDFSIKLVDSLP.

Residues 40-46, 92-93, Asn119, and Thr140 each bind NADP(+); these read GGTSGIG and DL. Ser174 contributes to the substrate binding site. Tyr196 functions as the Proton acceptor in the catalytic mechanism. The interval 301-317 is interaction with calmodulin; it reads DTTLADKLWDFSIKLVD.

Belongs to the short-chain dehydrogenases/reductases (SDR) family. In terms of assembly, part of the Tic complex.

It localises to the plastid. It is found in the chloroplast inner membrane. Involved in protein precursor import into chloroplasts. This is Short-chain dehydrogenase TIC 32 B, chloroplastic from Brassica napus (Rape).